Reading from the N-terminus, the 188-residue chain is Cell division protein SepF (188 aa).

Belongs to the SepF family. In terms of assembly, homodimer. Interacts with FtsZ.

The protein resides in the cytoplasm. Cell division protein that is part of the divisome complex and is recruited early to the Z-ring. Probably stimulates Z-ring formation, perhaps through the cross-linking of FtsZ protofilaments. Its function overlaps with FtsA. The protein is Cell division protein SepF of Synechococcus sp. (strain CC9605).